A 404-amino-acid chain; its full sequence is Probable pectate lyase 18 (404 aa).

An N-terminal signal peptide occupies residues 1–20 (MSTLFFTFSLLLLAPLLVIS). Asn37 carries N-linked (GlcNAc...) asparagine glycosylation. A disulfide bridge connects residues Cys159 and Cys178. A glycan (N-linked (GlcNAc...) asparagine) is linked at Asn191. Ca(2+) is bound by residues Asp200, Asp202, Asp224, and Asp228. Arg280 is an active-site residue.

It belongs to the polysaccharide lyase 1 family. Requires Ca(2+) as cofactor. In terms of tissue distribution, predominantly found in the pistil where it is found in the outer five layers of the strands of transmitting tissue within the upper two-thirds of the style. Found at much lower levels in the anthers and vegetative organs.

It is found in the secreted. The catalysed reaction is Eliminative cleavage of (1-&gt;4)-alpha-D-galacturonan to give oligosaccharides with 4-deoxy-alpha-D-galact-4-enuronosyl groups at their non-reducing ends.. Its pathway is glycan metabolism; pectin degradation; 2-dehydro-3-deoxy-D-gluconate from pectin: step 2/5. May have a role in the development of the transmitting tissue of the style and/or in the events related to pollination such as some aspect in the facilitation of compatible pollen tube growth. In Solanum lycopersicum (Tomato), this protein is Probable pectate lyase 18.